A 208-amino-acid polypeptide reads, in one-letter code: Putative RING finger protein 413R (208 aa).

The disordered stretch occupies residues 1 to 87 (MDAIFYPLPI…RHWSDDDSDR (87 aa)). A compositionally biased stretch (acidic residues) spans 22–71 (DFQEEDFQEEDFQEEDFQEEDFQEEDEDEEDEEVNEYPSDLDDEYPDSDY). The segment covering 72 to 82 (YDERSDRHWSD) has biased composition (basic and acidic residues). Residues 83–147 (DDSDRDLDDL…KLTTLSKNLT (65 aa)) adopt a coiled-coil conformation. The segment at 148 to 196 (CIICLTNQVQILTIPCGHLIMCNPCSLNLNNSVCTRGVNSNYEKCPKCR) adopts an RING-type zinc-finger fold.

In Acheta domesticus (House cricket), this protein is Putative RING finger protein 413R (EF2).